The chain runs to 203 residues: MKLTEKNITLFALTCFVIISTTWLFLNPIQPKEKHIAEIKEGDYVVIKGYIQEMYVKRDKYRHVINISRIVINDGTGNLDVVAFGKTREELLTYILSYNPMIKEGDYIEVKGRVTLYKGKYEIILNNIKDFKLLKKNNFERDIYLSPTPTGIYASKYGKKYHTSKNCPYGKRLKEENIIYFYSEDDAKALGYEKCKWCEEHGG.

This is an uncharacterized protein from Methanocaldococcus jannaschii (strain ATCC 43067 / DSM 2661 / JAL-1 / JCM 10045 / NBRC 100440) (Methanococcus jannaschii).